Consider the following 139-residue polypeptide: Actin-depolymerizing factor 1 (139 aa).

One can recognise an ADF-H domain in the interval 5–139; sequence ASGMAVHDDC…DLDVFRSRAN (135 aa). S6 is subject to Phosphoserine; by CPK3.

The protein belongs to the actin-binding proteins ADF family. Interacts with the 14-3-3-like protein GRF6/AFT1. Post-translationally, phosphorylation at Ser-6 by CPK3/CDPK6 inhibits actin-depolimerizing activity. Expressed in vascular tissues of all organs.

The protein localises to the cytoplasm. Its subcellular location is the cytoskeleton. Actin-depolymerizing protein. Stimulates F-actin depolymerization. Involved in plant development, cell organ expansion and flowering by controlling breakdown of thick actin cables. Severs actin filaments or bundles and promotes actin cytoskeleton disassembly. Binds monomeric actin (G-actin) with a marked preference for the ADP-loaded form and inhibits the rate of nucleotide exchange on G-actin. The chain is Actin-depolymerizing factor 1 (ADF1) from Arabidopsis thaliana (Mouse-ear cress).